The sequence spans 212 residues: Imidazole glycerol phosphate synthase subunit HisH (212 aa).

Positions 2 to 212 (RVVVIDYNGG…ILGNFLRWTS (211 aa)) constitute a Glutamine amidotransferase type-1 domain. Cys-85 (nucleophile) is an active-site residue. Active-site residues include His-192 and Glu-194.

As to quaternary structure, heterodimer of HisH and HisF.

The protein localises to the cytoplasm. The enzyme catalyses 5-[(5-phospho-1-deoxy-D-ribulos-1-ylimino)methylamino]-1-(5-phospho-beta-D-ribosyl)imidazole-4-carboxamide + L-glutamine = D-erythro-1-(imidazol-4-yl)glycerol 3-phosphate + 5-amino-1-(5-phospho-beta-D-ribosyl)imidazole-4-carboxamide + L-glutamate + H(+). It carries out the reaction L-glutamine + H2O = L-glutamate + NH4(+). It functions in the pathway amino-acid biosynthesis; L-histidine biosynthesis; L-histidine from 5-phospho-alpha-D-ribose 1-diphosphate: step 5/9. IGPS catalyzes the conversion of PRFAR and glutamine to IGP, AICAR and glutamate. The HisH subunit catalyzes the hydrolysis of glutamine to glutamate and ammonia as part of the synthesis of IGP and AICAR. The resulting ammonia molecule is channeled to the active site of HisF. This chain is Imidazole glycerol phosphate synthase subunit HisH, found in Gluconobacter oxydans (strain 621H) (Gluconobacter suboxydans).